Reading from the N-terminus, the 420-residue chain is D-tagatose-1,6-bisphosphate aldolase subunit GatZ (420 aa).

This sequence belongs to the GatZ/KbaZ family. GatZ subfamily. As to quaternary structure, forms a complex with GatY.

The protein operates within carbohydrate metabolism; D-tagatose 6-phosphate degradation; D-glyceraldehyde 3-phosphate and glycerone phosphate from D-tagatose 6-phosphate: step 2/2. Component of the tagatose-1,6-bisphosphate aldolase GatYZ that is required for full activity and stability of the Y subunit. Could have a chaperone-like function for the proper and stable folding of GatY. When expressed alone, GatZ does not show any aldolase activity. Is involved in the catabolism of galactitol. This chain is D-tagatose-1,6-bisphosphate aldolase subunit GatZ, found in Escherichia coli O45:K1 (strain S88 / ExPEC).